We begin with the raw amino-acid sequence, 285 residues long: tRNA uridine(34) hydroxylase (285 aa).

The region spanning 130-225 is the Rhodanese domain; that stretch reads RGDDVVFFDG…YGEAFGDTGL (96 aa). The active-site Cysteine persulfide intermediate is cysteine 185.

The protein belongs to the TrhO family.

The catalysed reaction is uridine(34) in tRNA + AH2 + O2 = 5-hydroxyuridine(34) in tRNA + A + H2O. Catalyzes oxygen-dependent 5-hydroxyuridine (ho5U) modification at position 34 in tRNAs. In Rhodococcus opacus (strain B4), this protein is tRNA uridine(34) hydroxylase.